The primary structure comprises 124 residues: MATSQADARDRQFLAVIGDEDSVTGLLLAGIGHVTAPPDSQKNFLVVDNKTDNAAIEAAFDRFTTERKDIGIVLINQHIADRIRHRVDTHTAAFPTVLEIPSKDHPYDPEKDSVLRRVRRLFGE.

The protein belongs to the V-ATPase F subunit family. As to quaternary structure, V-ATPase is a heteromultimeric enzyme composed of a peripheral catalytic V1 complex (components A to H) attached to an integral membrane V0 proton pore complex (components: a, c, c', c'', d, e, f and VOA1).

Its subcellular location is the vacuole membrane. Functionally, subunit of the V1 complex of vacuolar(H+)-ATPase (V-ATPase), a multisubunit enzyme composed of a peripheral complex (V1) that hydrolyzes ATP and a membrane integral complex (V0) that translocates protons. V-ATPase is responsible for acidifying and maintaining the pH of intracellular compartments. The protein is V-type proton ATPase subunit F (vma-7) of Neurospora crassa (strain ATCC 24698 / 74-OR23-1A / CBS 708.71 / DSM 1257 / FGSC 987).